Consider the following 59-residue polypeptide: Single-pass membrane and coiled-coil domain-containing protein 4 homolog (59 aa).

Residues 1-11 (MAGRNKAKPRL) are compositionally biased toward basic residues. Residues 1 to 20 (MAGRNKAKPRLSKKEKEERR) form a disordered region. Residues 10-30 (RLSKKEKEERRKDMAEVQEKV) adopt a coiled-coil conformation. A helical membrane pass occupies residues 30–50 (VFSVVVPVVVAFTVVIMLIVY).

The protein belongs to the SMCO4 family.

The protein resides in the membrane. This is Single-pass membrane and coiled-coil domain-containing protein 4 homolog from Argas monolakensis (Mono lake bird tick).